The sequence spans 293 residues: tRNA (guanine(9)-N1)-methyltransferase (293 aa).

Residues 1 to 31 (MSNDEINQNEEKVKRTPPLPPVPEGMSKKQW) are disordered. The residue at position 16 (T16) is a Phosphothreonine. Residues 32 to 61 (KKMCKRQRWEENKAKYNAERRVKKKRLRHE) adopt a coiled-coil conformation. Positions 83–279 (EPRINVNQTD…SVLPPRKLDA (197 aa)) constitute an SAM-dependent MTase TRM10-type domain. Residues 186 to 187 (LT), G206, 210 to 214 (DKNRY), C218, L232, and 244 to 246 (RVL) each bind S-adenosyl-L-methionine. The active-site Proton acceptor is D210. Position 283 is a phosphoserine (S283).

It belongs to the class IV-like SAM-binding methyltransferase superfamily. TRM10 family. As to quaternary structure, monomer.

The protein localises to the cytoplasm. Its subcellular location is the nucleus. The catalysed reaction is guanosine(9) in tRNA + S-adenosyl-L-methionine = N(1)-methylguanosine(9) in tRNA + S-adenosyl-L-homocysteine + H(+). Its function is as follows. S-adenosyl-L-methionine-dependent guanine N(1)-methyltransferase that catalyzes the formation of N(1)-methylguanine at position 9 (m1G9) in cytoplasmic tRNAs. This chain is tRNA (guanine(9)-N1)-methyltransferase, found in Saccharomyces cerevisiae (strain ATCC 204508 / S288c) (Baker's yeast).